The following is a 193-amino-acid chain: Outer-membrane lipoprotein LolB (193 aa).

The first 21 residues, 1 to 21, serve as a signal peptide directing secretion; the sequence is MRPARRFLAALACVAGALLSA. Cys22 carries N-palmitoyl cysteine lipidation. Cys22 is lipidated: S-diacylglycerol cysteine.

The protein belongs to the LolB family. In terms of assembly, monomer.

The protein localises to the cell outer membrane. Functionally, plays a critical role in the incorporation of lipoproteins in the outer membrane after they are released by the LolA protein. The protein is Outer-membrane lipoprotein LolB of Azoarcus sp. (strain BH72).